The sequence spans 375 residues: 23S rRNA (uracil(747)-C(5))-methyltransferase RlmC (375 aa).

[4Fe-4S] cluster contacts are provided by Cys-3, Cys-11, Cys-14, and Cys-87. The S-adenosyl-L-methionine site is built by Gln-212, Phe-241, Glu-262, and Asn-307. Cys-334 acts as the Nucleophile in catalysis.

The protein belongs to the class I-like SAM-binding methyltransferase superfamily. RNA M5U methyltransferase family. RlmC subfamily.

The catalysed reaction is uridine(747) in 23S rRNA + S-adenosyl-L-methionine = 5-methyluridine(747) in 23S rRNA + S-adenosyl-L-homocysteine + H(+). Functionally, catalyzes the formation of 5-methyl-uridine at position 747 (m5U747) in 23S rRNA. In Salmonella typhi, this protein is 23S rRNA (uracil(747)-C(5))-methyltransferase RlmC.